A 370-amino-acid polypeptide reads, in one-letter code: D-alanine--D-alanine ligase (370 aa).

Residues 144-352 form the ATP-grasp domain; the sequence is KKIFADAGIP…YSALIERLVD (209 aa). An ATP-binding site is contributed by 177–232; sequence EEVLTYPVFVKPANLGSSVGISKATNKKELEDAMTEAFLYDRRVVVEQGVVAREIE. Mg(2+) is bound by residues aspartate 306, glutamate 319, and asparagine 321.

The protein belongs to the D-alanine--D-alanine ligase family. The cofactor is Mg(2+). Requires Mn(2+) as cofactor.

It localises to the cytoplasm. The enzyme catalyses 2 D-alanine + ATP = D-alanyl-D-alanine + ADP + phosphate + H(+). The protein operates within cell wall biogenesis; peptidoglycan biosynthesis. Functionally, cell wall formation. The polypeptide is D-alanine--D-alanine ligase (Listeria welshimeri serovar 6b (strain ATCC 35897 / DSM 20650 / CCUG 15529 / CIP 8149 / NCTC 11857 / SLCC 5334 / V8)).